The primary structure comprises 620 residues: Glutathione-regulated potassium-efflux system protein KefC (620 aa).

Transmembrane regions (helical) follow at residues 4-24 (HTLL…PIAV), 26-46 (LGLG…PWGL), 54-74 (SILH…GLEL), 90-110 (GALQ…FLGL), 114-134 (VAEL…MQAM), 149-169 (FAVL…IPLL), 178-198 (LGAF…VVVL), 218-238 (VFSA…EEVG), 270-290 (GLLL…GTLV), 294-314 (LRIL…LWLV), 327-347 (WFAV…GAAQ), and 359-379 (ALTL…VLLT). In terms of domain architecture, RCK N-terminal spans 399–518 (QPRVIVAGFG…AGVAMPERET (120 aa)). The segment at 599–620 (QGTAEGKHSGEVADEPEVKPSI) is disordered.

This sequence belongs to the monovalent cation:proton antiporter 2 (CPA2) transporter (TC 2.A.37) family. KefC subfamily. As to quaternary structure, homodimer. Interacts with the regulatory subunit KefF.

It is found in the cell inner membrane. Its function is as follows. Pore-forming subunit of a potassium efflux system that confers protection against electrophiles. Catalyzes K(+)/H(+) antiport. The protein is Glutathione-regulated potassium-efflux system protein KefC of Salmonella paratyphi B (strain ATCC BAA-1250 / SPB7).